We begin with the raw amino-acid sequence, 128 residues long: Calcitonin gene-related peptide 1 (128 aa).

The signal sequence occupies residues 1 to 25; it reads MGFLKFSPFLVVSILLLYQACSLQA. Positions 26 to 80 are excised as a propeptide; it reads VPLRSILESSPGMATLSEEEVRLLAALVQDYMQMKARELEQEEEQEAEGSSVTAQ. A disulfide bridge links C84 with C89. The residue at position 119 (F119) is a Phenylalanine amide. The propeptide occupies 125–128; the sequence is DLQA.

This sequence belongs to the calcitonin family. Detected in nerve cells of cerebrum, hippocampus and pons/midbrain in newborns, and only in nerve cells of pons/midbrain in adult.

The protein localises to the secreted. CGRP1/CALCA is a peptide hormone that induces vasodilation mediated by the CALCRL-RAMP1 receptor complex. Dilates a variety of vessels including the coronary, cerebral and systemic vasculature. Its abundance in the CNS also points toward a neurotransmitter or neuromodulator role. It also elevates platelet cAMP. CGRP1 can also bind and activate CALCR-RAMP1 (AMYR1) receptor complex. This is Calcitonin gene-related peptide 1 from Mus musculus (Mouse).